The following is a 78-amino-acid chain: MNRTKLVLGAVILGSTLLAGCSSNAKIDQLSSDVQTLNAKVDQLSNDVNAMRSDVQAAKDDAARANQRLDNQATKYRK.

The first 20 residues, 1-20, serve as a signal peptide directing secretion; it reads MNRTKLVLGAVILGSTLLAG. Cys21 carries N-palmitoyl cysteine lipidation. Cys21 carries S-diacylglycerol cysteine lipidation. 2 repeats span residues 24 to 34 and 38 to 48; these read NAKIDQLSSDV and NAKVDQLSNDV. Residues 27-75 adopt a coiled-coil conformation; sequence IDQLSSDVQTLNAKVDQLSNDVNAMRSDVQAAKDDAARANQRLDNQATK. A disordered region spans residues 56–78; that stretch reads QAAKDDAARANQRLDNQATKYRK. The segment covering 68 to 78 has biased composition (polar residues); it reads RLDNQATKYRK. Lys78 bears the N6-murein peptidoglycan lysine mark.

It belongs to the Lpp family. In terms of assembly, homotrimer.

Its subcellular location is the cell outer membrane. It localises to the secreted. It is found in the cell wall. In terms of biological role, a highly abundant outer membrane lipoprotein that controls the distance between the inner and outer membranes. The only protein known to be covalently linked to the peptidoglycan network (PGN). Also non-covalently binds the PGN. The link between the cell outer membrane and PGN contributes to maintenance of the structural and functional integrity of the cell envelope, and maintains the correct distance between the PGN and the outer membrane. The sequence is that of Major outer membrane lipoprotein Lpp 1 from Salmonella paratyphi A (strain ATCC 9150 / SARB42).